We begin with the raw amino-acid sequence, 979 residues long: Mast/stem cell growth factor receptor Kit (979 aa).

Residues 1–24 (MRGARGAWDLLCVLLVLLRGQTAT) form the signal peptide. The Extracellular segment spans residues 25–527 (SQPSASPGEP…QIQAHTLFTP (503 aa)). 3 consecutive Ig-like C2-type domains span residues 31–117 (PGEP…DPAK), 126–210 (FGKE…AAIK), and 217–315 (VPET…EKGF). Cystine bridges form between C58–C98, C137–C187, C152–C184, and C234–C293. N-linked (GlcNAc...) asparagine glycosylation occurs at N146. N296, N303, N323, N355, N370, N466, and N489 each carry an N-linked (GlcNAc...) asparagine glycan. Ig-like C2-type domains lie at 324–417 (TTVF…TKPE) and 420–514 (TYDR…FKGN). The cysteines at positions 431 and 494 are disulfide-linked. A helical membrane pass occupies residues 528–548 (LLIGFVVAAGAMGIIVMVLTY). The Cytoplasmic portion of the chain corresponds to 549–979 (KYLQKPMYEV…TQPLLVHEDA (431 aa)). 2 positions are modified to phosphotyrosine; by autocatalysis: Y550 and Y556. Y571 provides a ligand contact to Mg(2+). 2 positions are modified to phosphotyrosine: Y571 and Y573. The segment at 571-573 (YVY) is important for interaction with phosphotyrosine-binding proteins. One can recognise a Protein kinase domain in the interval 592 to 939 (LSFGKTLGAG…ISDSTKHIYS (348 aa)). ATP contacts are provided by residues 599–606 (GAGAFGKV), K626, and 674–680 (EYCCYGD). At Y706 the chain carries Phosphotyrosine. Residue S720 is modified to Phosphoserine. Phosphotyrosine; by autocatalysis occurs at positions 723 and 732. S743 and S748 each carry phosphoserine; by PKC/PRKCA. The Proton acceptor role is filled by D794. ATP is bound at residue R798. Residues N799 and D812 each coordinate Mg(2+). S823 bears the Phosphoserine mark. Y825 carries the phosphotyrosine; by autocatalysis modification. Phosphoserine is present on S893. Y902 carries the phosphotyrosine; by autocatalysis modification. Y938 bears the Phosphotyrosine mark. S962 carries the post-translational modification Phosphoserine.

This sequence belongs to the protein kinase superfamily. Tyr protein kinase family. CSF-1/PDGF receptor subfamily. Monomer in the absence of bound KITLG/SCF. Homodimer in the presence of bound KITLG/SCF, forming a heterotetramer with two KITLG/SCF molecules. Interacts (via phosphorylated tyrosine residues) with the adapter proteins GRB2 and GRB7 (via SH2 domain), and SH2B2/APS. Interacts (via C-terminus) with MPDZ (via the tenth PDZ domain). Interacts (via phosphorylated tyrosine residues) with the protein phosphatases PTPN6/SHP-1 (via SH2 domain), PTPN11/SHP-2 (via SH2 domain) and PTPRU. Interacts with DOK1 and TEC. Interacts with the protein kinase FES/FPS. Interacts with PLCG1. Interacts (via phosphorylated tyrosine residues) with PIK3R1 and PIK3 catalytic subunit. Interacts (KITLG/SCF-bound) with IL1RL1. Interacts with IL1RAP (independent of stimulation with KITLG/SCF). A mast cell-specific KITLG/SCF-induced interleukin-33 signaling complex contains IL1RL1, IL1RAP, KIT and MYD88. In terms of processing, ubiquitinated by SOCS6. KIT is rapidly ubiquitinated after autophosphorylation induced by KITLG/SCF binding, leading to internalization and degradation. Autophosphorylated on tyrosine residues. KITLG/SCF binding promotes autophosphorylation of isoform 1 and isoform 2. Isoform 1 shows low levels of tyrosine phosphorylation in the absence of added KITLG/SCF, while isoform 2 requires stimulation by KITLG/SCF for phosphorylation (in vitro). Phosphorylation of Tyr-573 is required for interaction with PTPN6/SHP-1. Phosphorylation of Tyr-571 is required for interaction with PTPN11/SHP-2. Phosphorylated tyrosine residues are important for interaction with specific binding partners. In terms of tissue distribution, isoform 1 and isoform 2 are detected in bone marrow cells, spermatogonia and spermatocytes, but not in round spermatids, elongating spermatids and spermatozoa. Isoform 3 is detected in round spermatids, elongating spermatids and spermatozoa, but not in spermatogonia and spermatocytes (at protein level). Isoform 1 is widely expressed and detected in fetal liver and bone marrow. Isoform 3 is detected in bone marrow cells enriched in hematopoietic stem cells.

Its subcellular location is the cell membrane. It localises to the cytoplasm. The catalysed reaction is L-tyrosyl-[protein] + ATP = O-phospho-L-tyrosyl-[protein] + ADP + H(+). Present in an inactive conformation in the absence of bound ligand. KITLG/SCF binding leads to dimerization and activation by autophosphorylation. Functionally, tyrosine-protein kinase that acts as a cell-surface receptor for the cytokine KITLG/SCF and plays an essential role in the regulation of cell survival and proliferation, hematopoiesis, stem cell maintenance, gametogenesis, mast cell development, migration and function, and in melanogenesis. In response to KITLG/SCF binding, KIT can activate several signaling pathways. Phosphorylates PIK3R1, PLCG1, SH2B2/APS and CBL. Activates the AKT1 signaling pathway by phosphorylation of PIK3R1, the regulatory subunit of phosphatidylinositol 3-kinase. Activated KIT also transmits signals via GRB2 and activation of RAS, RAF1 and the MAP kinases MAPK1/ERK2 and/or MAPK3/ERK1. Promotes activation of STAT family members STAT1, STAT3, STAT5A and STAT5B. Activation of PLCG1 leads to the production of the cellular signaling molecules diacylglycerol and inositol 1,4,5-trisphosphate. KIT signaling is modulated by protein phosphatases, and by rapid internalization and degradation of the receptor. Activated KIT promotes phosphorylation of the protein phosphatases PTPN6/SHP-1 and PTPRU, and of the transcription factors STAT1, STAT3, STAT5A and STAT5B. Promotes phosphorylation of PIK3R1, CBL, CRK (isoform Crk-II), LYN, MAPK1/ERK2 and/or MAPK3/ERK1, PLCG1, SRC and SHC1. This chain is Mast/stem cell growth factor receptor Kit (Kit), found in Mus musculus (Mouse).